A 141-amino-acid polypeptide reads, in one-letter code: Large ribosomal subunit protein uL11 (141 aa).

Belongs to the universal ribosomal protein uL11 family. In terms of assembly, part of the ribosomal stalk of the 50S ribosomal subunit. Interacts with L10 and the large rRNA to form the base of the stalk. L10 forms an elongated spine to which L12 dimers bind in a sequential fashion forming a multimeric L10(L12)X complex. Post-translationally, one or more lysine residues are methylated.

Functionally, forms part of the ribosomal stalk which helps the ribosome interact with GTP-bound translation factors. The sequence is that of Large ribosomal subunit protein uL11 from Campylobacter lari (strain RM2100 / D67 / ATCC BAA-1060).